Consider the following 523-residue polypeptide: Tyrosine/DOPA decarboxylase 5 (523 aa).

A compositionally biased stretch (polar residues) spans 1 to 19 (MGSLPTDNLESMSICSQNP). Disordered stretches follow at residues 1-20 (MGSL…QNPL) and 47-66 (SRSQ…APNH). Residue Lys-321 is modified to N6-(pyridoxal phosphate)lysine.

This sequence belongs to the group II decarboxylase family. Homodimer. Pyridoxal 5'-phosphate is required as a cofactor. Roots.

The catalysed reaction is L-tyrosine + H(+) = tyramine + CO2. The enzyme catalyses L-dopa + H(+) = dopamine + CO2. It catalyses the reaction 5-hydroxy-L-tryptophan + H(+) = serotonin + CO2. May play an important role in providing precursors for alkaloid synthesis in the roots and germinating seedlings. The chain is Tyrosine/DOPA decarboxylase 5 (TYDC5) from Papaver somniferum (Opium poppy).